The sequence spans 275 residues: Cis-2,3-dihydrobiphenyl-2,3-diol dehydrogenase (275 aa).

An NAD(+)-binding site is contributed by 9–33; the sequence is LITGGASGLGRALVDRFVAEAKVAV. Ser-140 provides a ligand contact to substrate. Tyr-153 serves as the catalytic Proton acceptor.

This sequence belongs to the short-chain dehydrogenases/reductases (SDR) family.

The enzyme catalyses (2R,3S)-3-phenylcyclohexa-3,5-diene-1,2-diol + NAD(+) = biphenyl-2,3-diol + NADH + H(+). The protein operates within xenobiotic degradation; biphenyl degradation; 2-hydroxy-2,4-pentadienoate and benzoate from biphenyl: step 2/4. This is Cis-2,3-dihydrobiphenyl-2,3-diol dehydrogenase (bphB) from Metapseudomonas furukawaii (Pseudomonas furukawaii).